The sequence spans 202 residues: Transcriptional regulator SdrP (202 aa).

The HTH crp-type domain maps to 117-189 (QRLKNRMAAA…YGKIQLLDLK (73 aa)). A DNA-binding region (H-T-H motif) is located at residues 149–168 (HDELAAAVGSVRETVTKVIG).

As to quaternary structure, homodimer.

Its function is as follows. Activates transcription. The consensus DNA-binding site of this transcriptional regulator is 5'-WWGTGAN(5-7)ACACWW-3' in which W is A or T and N is G, A, T or C. Regulated genes include those encoding proteins involved in nutrient and energy supply, redox control and polyadenylation of mRNA. Also regulates genes involved in oxidative stress response such as genes encoding manganese superoxide dismutase and catalase, and genes encoding a protein involved in nucleotide excision repair of damaged DNA and putative proteins involved in redox control, protein degradation and transcriptional regulation. The polypeptide is Transcriptional regulator SdrP (Thermus thermophilus (strain ATCC 27634 / DSM 579 / HB8)).